The primary structure comprises 485 residues: Glycogen synthase (485 aa).

Lys-18 serves as a coordination point for ADP-alpha-D-glucose.

This sequence belongs to the glycosyltransferase 1 family. Bacterial/plant glycogen synthase subfamily.

It carries out the reaction [(1-&gt;4)-alpha-D-glucosyl](n) + ADP-alpha-D-glucose = [(1-&gt;4)-alpha-D-glucosyl](n+1) + ADP + H(+). It participates in glycan biosynthesis; glycogen biosynthesis. Functionally, synthesizes alpha-1,4-glucan chains using ADP-glucose. The chain is Glycogen synthase from Dechloromonas aromatica (strain RCB).